The chain runs to 429 residues: Enolase (429 aa).

A (2R)-2-phosphoglycerate-binding site is contributed by Gln-163. The Proton donor role is filled by Glu-205. Positions 242, 287, and 314 each coordinate Mg(2+). (2R)-2-phosphoglycerate is bound by residues Lys-339, Arg-368, Ser-369, and Lys-390. The active-site Proton acceptor is the Lys-339.

The protein belongs to the enolase family. The cofactor is Mg(2+).

The protein resides in the cytoplasm. The protein localises to the secreted. It localises to the cell surface. The enzyme catalyses (2R)-2-phosphoglycerate = phosphoenolpyruvate + H2O. The protein operates within carbohydrate degradation; glycolysis; pyruvate from D-glyceraldehyde 3-phosphate: step 4/5. Its function is as follows. Catalyzes the reversible conversion of 2-phosphoglycerate (2-PG) into phosphoenolpyruvate (PEP). It is essential for the degradation of carbohydrates via glycolysis. This Anaeromyxobacter dehalogenans (strain 2CP-C) protein is Enolase.